The primary structure comprises 87 residues: Small cysteine-rich outer membrane protein omcA (87 aa).

Residues 1-19 (MKKAVLLATVFCGVVGLTS) form the signal peptide. The N-palmitoyl cysteine moiety is linked to residue Cys-20. The S-diacylglycerol cysteine moiety is linked to residue Cys-20.

Part of a disulfide cross-linked outer membrane complex (COMC) composed of the major outer membrane porin (MOMP), the small cysteine-rich protein (omcA) and the large cysteine-rich periplasmic protein (omcB). N-terminal amide-linked and S-diacylglycerol cysteine-linked to 16:0, 18:0, 15:0 branched, and 17:0 branched fatty acids (ratio 6:5:3:4) in the EB stage. The exact distribution of fatty acids has not been determined. Post-translationally, the N-terminus is blocked.

The protein localises to the cell outer membrane. In elementary bodies (EBs, the infectious stage, which is able to survive outside the host cell) provides the structural integrity of the outer envelope through disulfide cross-links with the large cysteine-rich periplasmic protein and the major outer membrane porin. It has been described in publications as the Sarkosyl-insoluble COMC (Chlamydia outer membrane complex), and serves as the functional equivalent of peptidoglycan. The protein is Small cysteine-rich outer membrane protein omcA (omcA) of Chlamydia psittaci (Chlamydophila psittaci).